A 396-amino-acid chain; its full sequence is uncharacterized protein (396 aa).

This is an uncharacterized protein from Pseudomonas amyloderamosa.